The chain runs to 470 residues: Tigger transposable element-derived protein 3 (470 aa).

In terms of domain architecture, HTH psq-type spans 3-55 (LNTKKKLHALSLAEKIQVLELLDESKMSQSEVARRFQVSQPQISRICKNKEKL). DNA-binding regions (H-T-H motif) lie at residues 31 to 51 (QSEVARRFQVSQPQISRICKN) and 100 to 130 (PMLLHKAKELADIMGQDFVPSIGWLVRWKRR). The HTH CENPB-type domain occupies 67–137 (ERKRKRESKY…KRRNNVGFGT (71 aa)). The DDE-1 domain occupies 167–360 (FSPEDVFGCA…VPRQLILSSF (194 aa)). Residues 402–421 (DPGPRVCKEETGTEDSGREE) are compositionally biased toward basic and acidic residues. Residues 402 to 426 (DPGPRVCKEETGTEDSGREEDGFEP) are disordered.

The protein belongs to the tigger transposable element derived protein family.

The protein localises to the nucleus. This chain is Tigger transposable element-derived protein 3 (Tigd3), found in Mus musculus (Mouse).